We begin with the raw amino-acid sequence, 63 residues long: Alpha-conotoxin-like Am1.6 (63 aa).

Residues 1 to 21 form the signal peptide; it reads MGMRMMFTVFLLVVLATTVVS. Positions 22-46 are excised as a propeptide; sequence FTSYRASDGRNAAAKASDLIALTVR. The segment at 50-52 is ser-Xaa-Pro motif, crucial for potent interaction with nAChR; the sequence is SRP.

This sequence belongs to the conotoxin A superfamily. In terms of processing, is not hydroxylated. Post-translationally, contains 2 disulfide bonds. In terms of tissue distribution, expressed by the venom duct.

The protein localises to the secreted. Alpha-conotoxins act on postsynaptic membranes, they bind to the nicotinic acetylcholine receptors (nAChR) and thus inhibit them. This is Alpha-conotoxin-like Am1.6 from Conus amadis (Amadis cone).